A 333-amino-acid chain; its full sequence is D-fructose 1,6-bisphosphatase class 2/sedoheptulose 1,7-bisphosphatase (333 aa).

Residues aspartate 33, glutamate 57, aspartate 85, and glutamate 88 each contribute to the Mn(2+) site. Substrate is bound by residues 88-90 (EGT), tyrosine 119, 164-166 (RTR), and 186-188 (DGD). Residue glutamate 213 participates in Mn(2+) binding.

Belongs to the FBPase class 2 family. In terms of assembly, homotetramer. Mn(2+) serves as cofactor.

It carries out the reaction beta-D-fructose 1,6-bisphosphate + H2O = beta-D-fructose 6-phosphate + phosphate. The enzyme catalyses D-sedoheptulose 1,7-bisphosphate + H2O = D-sedoheptulose 7-phosphate + phosphate. The protein operates within carbohydrate biosynthesis; Calvin cycle. Catalyzes the hydrolysis of fructose 1,6-bisphosphate (Fru 1,6-P2) and sedoheptulose 1,7-bisphosphate (Sed 1,7-P2) to fructose 6-phosphate and sedoheptulose 7-phosphate, respectively. This chain is D-fructose 1,6-bisphosphatase class 2/sedoheptulose 1,7-bisphosphatase, found in Prochlorococcus marinus (strain MIT 9312).